We begin with the raw amino-acid sequence, 975 residues long: MKLEHPDRLMNRTPLSLAALETHDAFAERHIGPDAASQQAMLDTLGFASRAALIDAVIPASIRRNETLPLGPFSQPKSEAEALAALRALADKNQVFRSYIGQGYYDTHTPAVILRNVLENPAWYTAYTPYQPEISQGRLEALLNFQQMVTDLTGLAISNASLLDEATAAAEAMTLLQRVGKPKSNVFYVADDVLPQTLEVIRTRALPIGIDVKTGPAADAAQSNAFGVLLQYPGVNGDVRDYRALTDAIHAAGGHVVVAADLLALTVLTPPGEWGADVAVGNTQRFGVPMGFGGPHAAYLAVRDEFKRQMPGRLVGVTVDAQGKPALRLALQTREQHIRREKATSNVCTAQALLAIMASMYAVYHGPHGLKTIALRVNRIAALFAAGVKQLGFATVNDTFFDTVTVDTGARTAQVHAFANAKRINLRRVSDARVGVSIDETTTRDDLADLLAVFAQAAGGTAPSVDALDAGLGGEAALPASLVRTSAYLTHHVFNRHHSETEMLRYLRSLSDKDLALDRSMIPLGSCTMKLNATSEMLPVTWPEFGRIHPFAPAEQTVGYREMIDQLEQMLVAATGYAAVSLQPNAGSQGEYAGLLIIHAYHASRGEGHRDVCLIPASAHGTNPASAHMAGMKVVVVACDAQGNVDIADLKAKAEQHSANLAAIMITYPSTHGVFEQNVREICEIVHAHGGQVYVDGANMNAMVGLTAPGQFGGDVSHLNLHKTFCIPHGGGGPGVGPVAVGAHLAKFLPNQRSTGYTRGEDGIGAVSAAPYGSASILPISWMYIAMMGAKNLTAATETAILNANYIAKRLAPHYPVLYSGPGGLVAHECILDLRPIKESSGITVDDVAKRLMDYGFHAPTMSFPVPGTLMVEPTESESKEELDRFIDAMIAIRDEIRAVEEGRADREDNPLRHAPHTAAVVTANEWPHAYSREQAAYPVASLGTNKYWPPVGRADNAYGDRNLFCACVPMSDYA.

Lys-723 is subject to N6-(pyridoxal phosphate)lysine.

This sequence belongs to the GcvP family. The glycine cleavage system is composed of four proteins: P, T, L and H. Pyridoxal 5'-phosphate serves as cofactor.

It carries out the reaction N(6)-[(R)-lipoyl]-L-lysyl-[glycine-cleavage complex H protein] + glycine + H(+) = N(6)-[(R)-S(8)-aminomethyldihydrolipoyl]-L-lysyl-[glycine-cleavage complex H protein] + CO2. In terms of biological role, the glycine cleavage system catalyzes the degradation of glycine. The P protein binds the alpha-amino group of glycine through its pyridoxal phosphate cofactor; CO(2) is released and the remaining methylamine moiety is then transferred to the lipoamide cofactor of the H protein. The chain is Glycine dehydrogenase (decarboxylating) from Burkholderia multivorans (strain ATCC 17616 / 249).